Reading from the N-terminus, the 357-residue chain is Alanine racemase (357 aa).

Lys-35 acts as the Proton acceptor; specific for D-alanine in catalysis. The residue at position 35 (Lys-35) is an N6-(pyridoxal phosphate)lysine. Arg-131 is a substrate binding site. The active-site Proton acceptor; specific for L-alanine is the Tyr-256. Met-304 is a binding site for substrate.

It belongs to the alanine racemase family. Pyridoxal 5'-phosphate serves as cofactor.

It carries out the reaction L-alanine = D-alanine. Its pathway is amino-acid biosynthesis; D-alanine biosynthesis; D-alanine from L-alanine: step 1/1. Its function is as follows. Catalyzes the interconversion of L-alanine and D-alanine. May also act on other amino acids. The chain is Alanine racemase (alr) from Legionella pneumophila (strain Lens).